A 230-amino-acid polypeptide reads, in one-letter code: Inactive L-threonine 3-dehydrogenase, mitochondrial (230 aa).

The protein belongs to the NAD(P)-dependent epimerase/dehydratase family. Expressed in all tissues examined. Detected in most cell types examined, but not observed in endothelial cells, glioma cell lines and some leukemia cell lines.

The protein resides in the mitochondrion. The protein is Inactive L-threonine 3-dehydrogenase, mitochondrial of Homo sapiens (Human).